Here is a 774-residue protein sequence, read N- to C-terminus: Polyribonucleotide nucleotidyltransferase (774 aa).

Mg(2+)-binding residues include Asp-485 and Asp-491. One can recognise a KH domain in the interval 552–611 (PRIETMSVPKDKIRDIIGTGGKIIREIVATTGAKVDIDDDGTVKISSSDTAQIEAARNWI). In terms of domain architecture, S1 motif spans 621–689 (GKIYTGKVVN…NRGKVRLSMR (69 aa)). Residues 689-774 (RVVDQETGEE…APAFLTRDDD (86 aa)) are disordered. A compositionally biased stretch (basic and acidic residues) spans 700-755 (PDTRPPREERPRGDRGDRGDRGPRRDGDRRREGGDRGPRRDRGDRGDRPRRERSEG).

This sequence belongs to the polyribonucleotide nucleotidyltransferase family. It depends on Mg(2+) as a cofactor.

The protein localises to the cytoplasm. It catalyses the reaction RNA(n+1) + phosphate = RNA(n) + a ribonucleoside 5'-diphosphate. In terms of biological role, involved in mRNA degradation. Catalyzes the phosphorolysis of single-stranded polyribonucleotides processively in the 3'- to 5'-direction. This Rhizorhabdus wittichii (strain DSM 6014 / CCUG 31198 / JCM 15750 / NBRC 105917 / EY 4224 / RW1) (Sphingomonas wittichii) protein is Polyribonucleotide nucleotidyltransferase.